Consider the following 479-residue polypeptide: Monodehydroascorbate reductase 1, peroxisomal (479 aa).

The Cytoplasmic portion of the chain corresponds to 1 to 3 (MGR). The chain crosses the membrane as a helical span at residues 4 to 24 (AFEYVILGGGVAAGYAALEFV). Residues 12 to 15 (GGVA), E41, R48, K53, and 147 to 148 (RN) contribute to the FAD site. Residues 25–445 (RRNGGASSQE…QATGGGGKPT (421 aa)) lie on the Peroxisomal side of the membrane. NAD(+) is bound by residues 172–178 (GGYIGME), R202, and G260. Residues 174 to 178 (YIGME), R202, and G260 contribute to the NADP(+) site. FAD is bound at residue D297. An NAD(+)-binding site is contributed by 314 to 315 (EH). 314 to 315 (EH) contacts NADP(+). Residue V316 coordinates FAD. An L-ascorbate-binding site is contributed by R320. Y347 contacts FAD. Residue Y347 participates in NAD(+) binding. Y347 contributes to the NADP(+) binding site. Position 349 (R349) interacts with L-ascorbate. The helical transmembrane segment at 446-466 (CAWHATVGVAAAVSIAAFACW) threads the bilayer. Over 467–479 (YGWQAPYVLKRDF) the chain is Cytoplasmic.

The protein belongs to the FAD-dependent oxidoreductase family. The cofactor is FAD.

The protein resides in the peroxisome membrane. The catalysed reaction is 2 monodehydro-L-ascorbate radical + NADH + H(+) = 2 L-ascorbate + NAD(+). In terms of biological role, catalyzes the conversion of monodehydroascorbate to ascorbate, oxidizing NADH in the process. Ascorbate is a major antioxidant against reactive oxygen species (ROS) and nitric oxide (NO). In Oryza sativa subsp. japonica (Rice), this protein is Monodehydroascorbate reductase 1, peroxisomal.